Here is a 257-residue protein sequence, read N- to C-terminus: Protein YIPF5 (257 aa).

Over 1-124 the chain is Cytoplasmic; the sequence is MSGFENLNTD…KVADGSIMNE (124 aa). An interaction with Sec23 region spans residues 75–106; that stretch reads PASPQPFYGNNFEDEPPLLEELGINFDHIWQK. A helical membrane pass occupies residues 125–145; sequence TDLAGPMVFCLAFGATLLLAG. Lys146 is a topological domain (lumenal). A helical transmembrane segment spans residues 147-167; sequence IQFGYVYGISAIGCLGMFCLL. The Cytoplasmic portion of the chain corresponds to 168–173; the sequence is NLMSMT. A helical membrane pass occupies residues 174-194; it reads GVSFGCVASVLGYCLLPMILL. Topologically, residues 195–196 are lumenal; sequence SS. Residues 197 to 217 traverse the membrane as a helical segment; sequence FAVIFSLQGMVGIILTAGIIG. At 218 to 236 the chain is on the cytoplasmic side; sequence WCSFSASKIFISALAMEGQ. Residues 237 to 257 form a helical membrane-spanning segment; that stretch reads QLLVAYPCALLYGVFALISVF.

Belongs to the YIP1 family. In terms of assembly, interacts with the COPII coat components Sec23 (SEC23A and/or SEC23B) and Sec24 (SEC24A and/or SEC24B). Interacts with YIF1A. May interact with RAB1A. Interacts with YIPF3 and YIPF4. As to expression, ubiquitously expressed with abundant expression in pancreatic tissue, islets, beta cells, and brain. Highly expressed in coronary smooth muscles.

Its subcellular location is the endoplasmic reticulum membrane. The protein localises to the golgi apparatus. It is found in the cis-Golgi network membrane. The protein resides in the cytoplasmic vesicle. It localises to the COPII-coated vesicle. Its function is as follows. Plays a role in transport between endoplasmic reticulum and Golgi. In pancreatic beta cells, required to transport proinsulin from endoplasmic reticulum into the Golgi. This chain is Protein YIPF5, found in Homo sapiens (Human).